The primary structure comprises 489 residues: Putative ABC transporter ATP-binding protein TDE_0282 (489 aa).

ABC transporter domains lie at 2–241 (ITLR…SMKL) and 269–487 (FAVK…MQLE). Residues 36–43 (GASGCGKT) and 301–308 (GENGAGKT) contribute to the ATP site.

This sequence belongs to the ABC transporter superfamily.

The protein localises to the cell inner membrane. Functionally, probably part of an ABC transporter complex. Responsible for energy coupling to the transport system. The sequence is that of Putative ABC transporter ATP-binding protein TDE_0282 from Treponema denticola (strain ATCC 35405 / DSM 14222 / CIP 103919 / JCM 8153 / KCTC 15104).